The following is a 45-amino-acid chain: Large ribosomal subunit protein bL34 (45 aa).

Belongs to the bacterial ribosomal protein bL34 family.

The polypeptide is Large ribosomal subunit protein bL34 (Beutenbergia cavernae (strain ATCC BAA-8 / DSM 12333 / CCUG 43141 / JCM 11478 / NBRC 16432 / NCIMB 13614 / HKI 0122)).